The chain runs to 151 residues: Cyanate hydratase (151 aa).

Residues R92, E95, and S118 contribute to the active site.

This sequence belongs to the cyanase family.

The enzyme catalyses cyanate + hydrogencarbonate + 3 H(+) = NH4(+) + 2 CO2. Catalyzes the reaction of cyanate with bicarbonate to produce ammonia and carbon dioxide. This Coprinopsis cinerea (strain Okayama-7 / 130 / ATCC MYA-4618 / FGSC 9003) (Inky cap fungus) protein is Cyanate hydratase.